A 197-amino-acid polypeptide reads, in one-letter code: Probable host range protein 2 (197 aa).

A disordered region spans residues 172–197 (DHDDNDNADDDEEDDDEVNDIEDDYE). Positions 174–197 (DDNDNADDDEEDDDEVNDIEDDYE) are enriched in acidic residues.

It belongs to the poxviridae C7 protein family.

The sequence is that of Probable host range protein 2 from Ovis aries (Sheep).